The chain runs to 348 residues: Lysophosphatidic acid receptor 2 (348 aa).

Residues 1-30 lie on the Extracellular side of the membrane; sequence MGQCYYNETIGFFYNNSGKELSSHWRPKDV. N-linked (GlcNAc...) asparagine glycosylation is found at Asn-7 and Asn-15. Residues 31–51 traverse the membrane as a helical segment; that stretch reads VVVALGLTVSVLVLLTNLLVI. At 52 to 66 the chain is on the cytoplasmic side; it reads AAIASNRRFHQPIYY. Residues 67-87 form a helical membrane-spanning segment; that stretch reads LLGNLAAADLFAGVAYLFLMF. The Extracellular portion of the chain corresponds to 88-100; sequence HTGPRTARLSLEG. A helical transmembrane segment spans residues 101-123; the sequence is WFLRQGLLDTSLTASVATLLAIA. The Cytoplasmic portion of the chain corresponds to 124 to 143; that stretch reads VERHRSVMAVQLHSRLPRGR. Residues 144–164 form a helical membrane-spanning segment; that stretch reads VVMLIVGVWVAALGLGLLPAH. Residues 165–185 are Extracellular-facing; it reads SWHCLCALDRCSRMAPLLSRS. Residues 186 to 206 traverse the membrane as a helical segment; it reads YLAVWALSSLLVFLLMVAVYT. The Cytoplasmic segment spans residues 207–239; sequence RIFFYVRRRVQRMAEHVSCHPRYRETTLSLVKT. A helical transmembrane segment spans residues 240-260; the sequence is VVIILGAFVVCWTPGQVVLLL. At 261 to 276 the chain is on the extracellular side; sequence DGLGCESCNVLAVEKY. Residues 277-294 traverse the membrane as a helical segment; it reads FLLLAEANSLVNAAVYSC. Residues 295 to 348 lie on the Cytoplasmic side of the membrane; sequence RDAEMRRTFRRLLCCACLRQSTRESVHYTSSAQGGASTRIMLPENGHPLMDSTL. Cys-308 carries the S-palmitoyl cysteine lipid modification. Residues 345 to 348 carry the PDZ-binding motif; the sequence is DSTL.

This sequence belongs to the G-protein coupled receptor 1 family. Interacts with SLC9A3R2/NHERF2, MAGI3 and PLCB3. Interacts with RALA and GRK2. In terms of tissue distribution, expressed most abundantly in testes and peripheral blood leukocytes with less expression in pancreas, spleen, thymus and prostate. Little or no expression in heart, brain, placenta, lung, liver, skeletal muscle, kidney, ovary, small intestine, or colon.

It localises to the cell surface. Its subcellular location is the cell membrane. Functionally, receptor for lysophosphatidic acid (LPA), a mediator of diverse cellular activities. Seems to be coupled to the G(i)/G(o), G(12)/G(13), and G(q) families of heteromeric G proteins. Plays a key role in phospholipase C-beta (PLC-beta) signaling pathway. Stimulates phospholipase C (PLC) activity in a manner that is independent of RALA activation. This is Lysophosphatidic acid receptor 2 from Homo sapiens (Human).